We begin with the raw amino-acid sequence, 840 residues long: Protein translocase subunit SecA (840 aa).

ATP is bound by residues Q85, 103 to 107 (GEGKT), and D492. The interval 787–822 (QRERVAKETGASHGGDSQEVKKKPVKKEPKVGRNDL) is disordered. A compositionally biased stretch (basic and acidic residues) spans 802–819 (DSQEVKKKPVKKEPKVGR). Zn(2+)-binding residues include C823, C825, C834, and C835.

It belongs to the SecA family. As to quaternary structure, monomer and homodimer. Part of the essential Sec protein translocation apparatus which comprises SecA, SecYEG and auxiliary proteins SecDF. Other proteins may also be involved. Zn(2+) serves as cofactor.

The protein resides in the cell membrane. Its subcellular location is the cytoplasm. It carries out the reaction ATP + H2O + cellular proteinSide 1 = ADP + phosphate + cellular proteinSide 2.. Part of the Sec protein translocase complex. Interacts with the SecYEG preprotein conducting channel. Has a central role in coupling the hydrolysis of ATP to the transfer of proteins into and across the cell membrane, serving as an ATP-driven molecular motor driving the stepwise translocation of polypeptide chains across the membrane. In Clostridium perfringens (strain ATCC 13124 / DSM 756 / JCM 1290 / NCIMB 6125 / NCTC 8237 / Type A), this protein is Protein translocase subunit SecA.